The primary structure comprises 104 residues: U20-lycotoxin-Ls1c (104 aa).

A signal peptide spans 1 to 30; that stretch reads MFSTSDQVSKMNSRILSALLILGIATCVIA. The region spanning 31–76 is the WAP domain; it reads GGFCPKSRHPQCDLSYKINDCCAQSDCRVGSVCCVEGCGNVCRAES. 5 disulfides stabilise this stretch: cysteine 34–cysteine 64, cysteine 42–cysteine 68, cysteine 51–cysteine 63, cysteine 52–cysteine 90, and cysteine 57–cysteine 72.

Belongs to the venom protein 11 family. 02 (wap-2) subfamily. In terms of processing, contains 5 disulfide bonds. Expressed by the venom gland.

The protein localises to the secreted. Has antibacterial activity. This chain is U20-lycotoxin-Ls1c, found in Lycosa singoriensis (Wolf spider).